A 504-amino-acid chain; its full sequence is Serine O-succinyltransferase (504 aa).

Residues 1 to 26 (MLRASSKRLQLSWQVFRRFQSSNPQL) constitute a mitochondrion transit peptide. The interval 49–70 (QACPNSVDPSASITSPSLSSGP) is disordered. Residues 57 to 70 (PSASITSPSLSSGP) show a composition bias toward low complexity. Positions 117–395 (NAILLHTGLS…SAEEIIKLNE (279 aa)) constitute an AB hydrolase-1 domain. The tract at residues 124-127 (GLSA) is important for substrate specificity. Ser221 acts as the Nucleophile in catalysis. Arg290 contributes to the substrate binding site. Catalysis depends on residues Asp443 and His480. Position 481 (Asp481) interacts with substrate.

The protein belongs to the AB hydrolase superfamily. MetX family.

It is found in the mitochondrion. It carries out the reaction succinyl-CoA + L-serine = O-succinyl-L-serine + CoA. Its pathway is amino-acid biosynthesis; L-cysteine biosynthesis; L-cysteine from L-serine: step 1/2. In terms of biological role, transfers a succinyl group from succinyl-CoA to L-serine, forming succinyl-L-serine. Also has weak serine acetyl transferase activity and homoserine succinyl transferase activity. This Schizosaccharomyces pombe (strain 972 / ATCC 24843) (Fission yeast) protein is Serine O-succinyltransferase.